We begin with the raw amino-acid sequence, 389 residues long: Succinate--CoA ligase [ADP-forming] subunit beta (389 aa).

The 228-residue stretch at 9 to 236 folds into the ATP-grasp domain; that stretch reads KELFASHGVP…KDAEDPLEAK (228 aa). ATP-binding positions include K45, 52–54, S94, and E99; that span reads GRG. 2 residues coordinate Mg(2+): N191 and D205. Substrate contacts are provided by residues N256 and 318–320; that span reads GIT.

It belongs to the succinate/malate CoA ligase beta subunit family. In terms of assembly, heterotetramer of two alpha and two beta subunits. The cofactor is Mg(2+).

It catalyses the reaction succinate + ATP + CoA = succinyl-CoA + ADP + phosphate. It carries out the reaction GTP + succinate + CoA = succinyl-CoA + GDP + phosphate. It participates in carbohydrate metabolism; tricarboxylic acid cycle; succinate from succinyl-CoA (ligase route): step 1/1. In terms of biological role, succinyl-CoA synthetase functions in the citric acid cycle (TCA), coupling the hydrolysis of succinyl-CoA to the synthesis of either ATP or GTP and thus represents the only step of substrate-level phosphorylation in the TCA. The beta subunit provides nucleotide specificity of the enzyme and binds the substrate succinate, while the binding sites for coenzyme A and phosphate are found in the alpha subunit. The sequence is that of Succinate--CoA ligase [ADP-forming] subunit beta from Saccharopolyspora erythraea (strain ATCC 11635 / DSM 40517 / JCM 4748 / NBRC 13426 / NCIMB 8594 / NRRL 2338).